We begin with the raw amino-acid sequence, 87 residues long: DNA-directed RNA polymerase subunit omega (87 aa).

It belongs to the RNA polymerase subunit omega family. As to quaternary structure, the RNAP catalytic core consists of 2 alpha, 1 beta, 1 beta' and 1 omega subunit. When a sigma factor is associated with the core the holoenzyme is formed, which can initiate transcription.

It carries out the reaction RNA(n) + a ribonucleoside 5'-triphosphate = RNA(n+1) + diphosphate. In terms of biological role, promotes RNA polymerase assembly. Latches the N- and C-terminal regions of the beta' subunit thereby facilitating its interaction with the beta and alpha subunits. The sequence is that of DNA-directed RNA polymerase subunit omega from Ectopseudomonas mendocina (strain ymp) (Pseudomonas mendocina).